The sequence spans 183 residues: Protein Syd (183 aa).

This sequence belongs to the Syd family.

The protein localises to the cell inner membrane. Interacts with the SecY protein in vivo. May bind preferentially to an uncomplexed state of SecY, thus functioning either as a chelating agent for excess SecY in the cell or as a regulatory factor that negatively controls the translocase function. This is Protein Syd from Yersinia pestis bv. Antiqua (strain Antiqua).